A 410-amino-acid chain; its full sequence is MKEELLKRFTKYVKVDTQSNEESTVCPTTPGQMELANILVTELKEIGMQEVTVDEFGYVMATLPSNTTKEVPVIGFLAHLDTATDLTGKNVNPQVHENYDGKDIVLNKDLNVVLSPKQFPELANYKGKTLITTDGTTLLGADDKAGITEIMVAMNYLINHPEIKHGKIRVAFTPDEEIGRGPERFDVEAFGAKYAYTMDGGPLGELEYESFNAAGAKLTFNGNSVHPGTAKNKMINAVKMAMEFDAEIPKEEAPEYTDGYEGFYHLISLNGDVEQAKSYYIIRDFDHLKFVERKTHIASIAEKLAEKYGEGSVELKLNDQYYNMREKIEPVKEIVDIVSAAMRNLDIEPKISPIRGGTDGAQLSYKGLPTPNIFGGGENFHGKFEYVALESMVKATEVIIEVARLFEEKE.

Histidine 79 provides a ligand contact to Zn(2+). Aspartate 81 is a catalytic residue. Aspartate 142 is a Zn(2+) binding site. Catalysis depends on glutamate 176, which acts as the Proton acceptor. Residues glutamate 177, aspartate 199, and histidine 381 each contribute to the Zn(2+) site.

The protein belongs to the peptidase M20B family. Zn(2+) is required as a cofactor.

The protein localises to the cytoplasm. The catalysed reaction is Release of the N-terminal residue from a tripeptide.. In terms of biological role, cleaves the N-terminal amino acid of tripeptides. This chain is Peptidase T, found in Listeria innocua serovar 6a (strain ATCC BAA-680 / CLIP 11262).